Reading from the N-terminus, the 171-residue chain is Large ribosomal subunit protein bL9 (171 aa).

This sequence belongs to the bacterial ribosomal protein bL9 family.

Its function is as follows. Binds to the 23S rRNA. The sequence is that of Large ribosomal subunit protein bL9 from Rickettsia rickettsii (strain Iowa).